We begin with the raw amino-acid sequence, 436 residues long: Methylenetetrahydrofolate--tRNA-(uracil-5-)-methyltransferase TrmFO (436 aa).

10–15 is a binding site for FAD; that stretch reads GAGLAG.

Belongs to the MnmG family. TrmFO subfamily. FAD is required as a cofactor.

Its subcellular location is the cytoplasm. It carries out the reaction uridine(54) in tRNA + (6R)-5,10-methylene-5,6,7,8-tetrahydrofolate + NADH + H(+) = 5-methyluridine(54) in tRNA + (6S)-5,6,7,8-tetrahydrofolate + NAD(+). The enzyme catalyses uridine(54) in tRNA + (6R)-5,10-methylene-5,6,7,8-tetrahydrofolate + NADPH + H(+) = 5-methyluridine(54) in tRNA + (6S)-5,6,7,8-tetrahydrofolate + NADP(+). Functionally, catalyzes the folate-dependent formation of 5-methyl-uridine at position 54 (M-5-U54) in all tRNAs. The protein is Methylenetetrahydrofolate--tRNA-(uracil-5-)-methyltransferase TrmFO of Exiguobacterium sp. (strain ATCC BAA-1283 / AT1b).